A 226-amino-acid polypeptide reads, in one-letter code: Leucyl/phenylalanyl-tRNA--protein transferase (226 aa).

This sequence belongs to the L/F-transferase family.

The protein localises to the cytoplasm. It catalyses the reaction N-terminal L-lysyl-[protein] + L-leucyl-tRNA(Leu) = N-terminal L-leucyl-L-lysyl-[protein] + tRNA(Leu) + H(+). The enzyme catalyses N-terminal L-arginyl-[protein] + L-leucyl-tRNA(Leu) = N-terminal L-leucyl-L-arginyl-[protein] + tRNA(Leu) + H(+). It carries out the reaction L-phenylalanyl-tRNA(Phe) + an N-terminal L-alpha-aminoacyl-[protein] = an N-terminal L-phenylalanyl-L-alpha-aminoacyl-[protein] + tRNA(Phe). Its function is as follows. Functions in the N-end rule pathway of protein degradation where it conjugates Leu, Phe and, less efficiently, Met from aminoacyl-tRNAs to the N-termini of proteins containing an N-terminal arginine or lysine. The protein is Leucyl/phenylalanyl-tRNA--protein transferase of Pseudomonas entomophila (strain L48).